Reading from the N-terminus, the 453-residue chain is T-box transcription factor T homolog (453 aa).

Positions 47–217 (LWRRFSKLTN…YNPFAKAFLD (171 aa)) form a DNA-binding region, T-box. Positions 283–304 (RSHRSTPYPPPPYEQKYSPTSA) are disordered.

The protein resides in the nucleus. In terms of biological role, may be involved in the transcriptional regulation of genes required for gastrulation. In Patiria pectinifera (Starfish), this protein is T-box transcription factor T homolog.